Here is a 380-residue protein sequence, read N- to C-terminus: Geranylgeranyl pyrophosphate synthase cle6 (380 aa).

Positions 1-19 are enriched in low complexity; the sequence is MHSVRTSTTSTSSMVSSTM. Positions 1 to 55 are disordered; it reads MHSVRTSTTSTSSMVSSTMHPFDAFNAPQPYQQHHPPRWNIHNPHFSQTNGHSIQ. The span at 45-55 shows a compositional bias: polar residues; that stretch reads HFSQTNGHSIQ. Isopentenyl diphosphate contacts are provided by Lys-102, Arg-105, and His-134. The Mg(2+) site is built by Asp-141 and Asp-145. Arg-150 lines the dimethylallyl diphosphate pocket. Residue Arg-151 coordinates isopentenyl diphosphate. Dimethylallyl diphosphate is bound by residues Lys-229, Thr-230, and Gln-263. Asp-266 contributes to the Mg(2+) binding site. Dimethylallyl diphosphate is bound by residues Asn-270, Lys-280, and Lys-290.

The protein belongs to the FPP/GGPP synthase family. It depends on Mg(2+) as a cofactor.

The enzyme catalyses isopentenyl diphosphate + dimethylallyl diphosphate = (2E)-geranyl diphosphate + diphosphate. It carries out the reaction isopentenyl diphosphate + (2E)-geranyl diphosphate = (2E,6E)-farnesyl diphosphate + diphosphate. It catalyses the reaction isopentenyl diphosphate + (2E,6E)-farnesyl diphosphate = (2E,6E,10E)-geranylgeranyl diphosphate + diphosphate. It functions in the pathway secondary metabolite biosynthesis; terpenoid biosynthesis. Functionally, geranylgeranyl pyrophosphate synthase; part of the cluster A that mediates the biosynthesis of chevalone E and its oxidized derivatives that possess a unique five-membered lactone ring and can synergistically enhance the cytotoxicity of doxorubicin (DOX) in breast cancer cells. Within the pathway, cle6 takes part to the biosynthesis of the molecular scaffold by providing geranylgeranyl pyrophosphate (GGPP) to the prenyltransferase cle5 for C-3 geranylgeranylation of triacetic acid lactone. The molecular scaffold is commonly biosynthesized by a series of enzymes including the non-reducing polyketide synthase (NR-PKS) cle1 that produces the alpha-pyrone triacetic acid lactone (TAL); The membrane-bound prenyltransferase cle5 that accepts TAL as its substrate to perform a C-3 geranylgeranylation reaction, in which the pathway-dedicated GGPS cle6 is required to provide GGPP, the other substrate of cle5; the FAD-dependent monooxygenase Cle3 that forms an (S)-epoxide ring at the terminal olefin of the geranylgeranyl group; and the terpene cyclase Cle7 that catalyzes the cyclization of the prenyl group that yields the pentacyclic pathway intermediate chevalone E. Chevalone E can derivatize into seven new oxidized analogs by the cytochrome P450 monooxygenases cle2 (acting at C-20) and cle4 (acting at C-11 and C-12). The protein is Geranylgeranyl pyrophosphate synthase cle6 of Aspergillus versicolor.